Reading from the N-terminus, the 66-residue chain is Hirudin-PA (66 aa).

The segment at 1 to 3 is interaction with thrombin active site; sequence ITY. 3 disulfide bridges follow: Cys6/Cys14, Cys16/Cys28, and Cys22/Cys39. The interval 39 to 66 is disordered; sequence CVTGEGTPKPQSHNQGDFEPIPEDAYDE. An O-linked (GalNAc...) threonine glycan is attached at Thr45. The segment at 55-66 is interaction with fibrinogen-binding exosite of thrombin; sequence DFEPIPEDAYDE. The residue at position 64 (Tyr64) is a Sulfotyrosine.

Belongs to the protease inhibitor I14 (hirudin) family.

The protein resides in the secreted. Its function is as follows. Hirudin is a potent thrombin-specific protease inhibitor. It forms a stable non-covalent complex with alpha-thrombin, thereby abolishing its ability to cleave fibrinogen. This Hirudo medicinalis (Medicinal leech) protein is Hirudin-PA.